A 235-amino-acid polypeptide reads, in one-letter code: Leucyl/phenylalanyl-tRNA--protein transferase (235 aa).

It belongs to the L/F-transferase family.

Its subcellular location is the cytoplasm. The catalysed reaction is N-terminal L-lysyl-[protein] + L-leucyl-tRNA(Leu) = N-terminal L-leucyl-L-lysyl-[protein] + tRNA(Leu) + H(+). It catalyses the reaction N-terminal L-arginyl-[protein] + L-leucyl-tRNA(Leu) = N-terminal L-leucyl-L-arginyl-[protein] + tRNA(Leu) + H(+). The enzyme catalyses L-phenylalanyl-tRNA(Phe) + an N-terminal L-alpha-aminoacyl-[protein] = an N-terminal L-phenylalanyl-L-alpha-aminoacyl-[protein] + tRNA(Phe). Functionally, functions in the N-end rule pathway of protein degradation where it conjugates Leu, Phe and, less efficiently, Met from aminoacyl-tRNAs to the N-termini of proteins containing an N-terminal arginine or lysine. This is Leucyl/phenylalanyl-tRNA--protein transferase from Aeromonas hydrophila subsp. hydrophila (strain ATCC 7966 / DSM 30187 / BCRC 13018 / CCUG 14551 / JCM 1027 / KCTC 2358 / NCIMB 9240 / NCTC 8049).